The primary structure comprises 364 residues: V-type proton ATPase subunit d (364 aa).

This sequence belongs to the V-ATPase V0D/AC39 subunit family. As to quaternary structure, V-ATPase is a heteromultimeric enzyme composed of a peripheral catalytic V1 complex (components A to H) attached to an integral membrane V0 proton pore complex (components: a, c, c', c'', d, e, f and VOA1).

The protein resides in the vacuole membrane. Its function is as follows. Subunit of the V0 complex of vacuolar(H+)-ATPase (V-ATPase), a multisubunit enzyme composed of a peripheral complex (V1) that hydrolyzes ATP and a membrane integral complex (V0) that translocates protons. V-ATPase is responsible for acidifying and maintaining the pH of intracellular compartments. This subunit is a non-integral membrane component of the membrane pore domain and is required for proper assembly of the V0 sector. Might be involved in the regulated assembly of V1 subunits onto the membrane sector or alternatively may prevent the passage of protons through V0 pores. In Neurospora crassa (strain ATCC 24698 / 74-OR23-1A / CBS 708.71 / DSM 1257 / FGSC 987), this protein is V-type proton ATPase subunit d.